Consider the following 37-residue polypeptide: Cytochrome b6-f complex subunit 5 (37 aa).

A helical transmembrane segment spans residues 5 to 25 (FLFGIVLGLIPITLTGLFVTA).

This sequence belongs to the PetG family. As to quaternary structure, the 4 large subunits of the cytochrome b6-f complex are cytochrome b6, subunit IV (17 kDa polypeptide, PetD), cytochrome f and the Rieske protein, while the 4 small subunits are PetG, PetL, PetM and PetN. The complex functions as a dimer.

The protein localises to the plastid. Its subcellular location is the chloroplast thylakoid membrane. In terms of biological role, component of the cytochrome b6-f complex, which mediates electron transfer between photosystem II (PSII) and photosystem I (PSI), cyclic electron flow around PSI, and state transitions. PetG is required for either the stability or assembly of the cytochrome b6-f complex. The polypeptide is Cytochrome b6-f complex subunit 5 (Phalaenopsis aphrodite subsp. formosana (Moth orchid)).